The following is a 418-amino-acid chain: Glutamyl-tRNA reductase (418 aa).

Substrate is bound by residues 49–52, serine 107, 112–114, and glutamine 118; these read TCNR and EPQ. Cysteine 50 acts as the Nucleophile in catalysis. 187–192 serves as a coordination point for NADP(+); it reads GAGETI.

Belongs to the glutamyl-tRNA reductase family. In terms of assembly, homodimer.

It catalyses the reaction (S)-4-amino-5-oxopentanoate + tRNA(Glu) + NADP(+) = L-glutamyl-tRNA(Glu) + NADPH + H(+). The protein operates within porphyrin-containing compound metabolism; protoporphyrin-IX biosynthesis; 5-aminolevulinate from L-glutamyl-tRNA(Glu): step 1/2. Its function is as follows. Catalyzes the NADPH-dependent reduction of glutamyl-tRNA(Glu) to glutamate 1-semialdehyde (GSA). This chain is Glutamyl-tRNA reductase, found in Pseudoalteromonas translucida (strain TAC 125).